A 293-amino-acid polypeptide reads, in one-letter code: MMRIALFLLTNLAVMVVFGLVLSLTGIQSSSVQGLMIMALLFGFGGSFVSLLMSKWMALRSVGGEVIEQPRNERERWLVNTVATQARQAGIAMPQVAIYHAPDINAFATGARRDASLVAVSTGLLQNMSPDEAEAVIAHEISHIANGDMVTMTLIQGVVNTFVIFISRILAQLAAGFMGGNRDDGEESNGNPLIYFAVATVLELVFGILASIITMWFSRHREFHADAGSAKLVGREKMIAALQRLKTSYEPQEATSMMAFCINGKSKSLSELFMTHPPLDKRIEALRTGEYLK.

Helical transmembrane passes span 4–24 (IALF…VLSL) and 34–54 (GLMI…LLMS). H139 provides a ligand contact to Zn(2+). E140 is an active-site residue. Residue H143 participates in Zn(2+) binding. 2 helical membrane-spanning segments follow: residues 158–178 (VVNT…AGFM) and 193–213 (LIYF…ASII). E222 is a Zn(2+) binding site.

This sequence belongs to the peptidase M48B family. Requires Zn(2+) as cofactor.

The protein localises to the cell inner membrane. The sequence is that of Protease HtpX from Escherichia fergusonii (strain ATCC 35469 / DSM 13698 / CCUG 18766 / IAM 14443 / JCM 21226 / LMG 7866 / NBRC 102419 / NCTC 12128 / CDC 0568-73).